Here is a 200-residue protein sequence, read N- to C-terminus: Putative hydrolase MhqD (200 aa).

Active-site charge relay system residues include S100, D150, and H181.

This sequence belongs to the AB hydrolase superfamily. AB hydrolase 2 family.

It is found in the cytoplasm. Putative hydrolase that may contribute to the degradation of aromatic compounds. This Bacillus subtilis (strain 168) protein is Putative hydrolase MhqD (mhqD).